The primary structure comprises 573 residues: 60 kDa heat shock protein, mitochondrial (573 aa).

Residues 1–26 (MLRLPTVFRQMRPVSRVLAPHLTRAY) constitute a mitochondrion transit peptide. Lysine 31 is modified (N6-succinyllysine). 2 positions are modified to phosphoserine: serine 67 and serine 70. Lysine 75 lines the ATP pocket. The residue at position 75 (lysine 75) is an N6-acetyllysine. Lysine 82 carries the N6-acetyllysine; alternate modification. An N6-succinyllysine; alternate modification is found at lysine 82. Lysine 87 is modified (N6-acetyllysine). At tyrosine 90 the chain carries Phosphotyrosine. Lysine 91 is modified (N6-acetyllysine). 111 to 115 (DGTTT) provides a ligand contact to ATP. The residue at position 125 (lysine 125) is an N6-acetyllysine; alternate. The residue at position 125 (lysine 125) is an N6-succinyllysine; alternate. Position 130 is an N6-acetyllysine (lysine 130). Lysine 133 carries the N6-acetyllysine; alternate modification. Lysine 133 is subject to N6-succinyllysine; alternate. Lysine 133 is subject to N6-malonyllysine; alternate. Lysine 156 is modified (N6-acetyllysine). N6-acetyllysine; alternate is present on residues lysine 191, lysine 202, lysine 205, lysine 218, and lysine 236. Lysine 191, lysine 202, lysine 205, lysine 218, and lysine 236 each carry N6-succinyllysine; alternate. Position 249 is an N6-acetyllysine (lysine 249). Lysine 250 is subject to N6-acetyllysine; alternate. Lysine 250 carries the post-translational modification N6-succinyllysine; alternate. An N6-acetyllysine mark is found at lysine 269 and lysine 292. Lysine 301 is modified (N6-succinyllysine). Lysine 314 carries the N6-acetyllysine modification. Lysine 352 carries the post-translational modification N6-acetyllysine; alternate. Lysine 352 bears the N6-succinyllysine; alternate mark. N6-acetyllysine is present on lysine 389. Lysine 396 bears the N6-acetyllysine; alternate mark. The residue at position 396 (lysine 396) is an N6-succinyllysine; alternate. Serine 410 is modified (phosphoserine). ATP is bound at residue glycine 440. Lysine 469 is modified (N6-acetyllysine). At lysine 481 the chain carries N6-acetyllysine; alternate. Residue lysine 481 is modified to N6-succinyllysine; alternate. Serine 488 carries the post-translational modification Phosphoserine. Aspartate 520 lines the ATP pocket. Lysine 551 is covalently cross-linked (Glycyl lysine isopeptide (Lys-Gly) (interchain with G-Cter in SUMO2)).

Belongs to the chaperonin (HSP60) family. Homoheptamer arranged in a ring structure. The functional units of these chaperonins consist of heptameric rings of the large subunit Hsp60, which function as a back-to-back double ring. Interacts with 2 heptameric Hsp10 rings to form the symmetrical football complex. Interacts with HRAS. Interacts with ATAD3A. Interacts with ETFBKMT and EEF1AKMT3. Interacts with MFHAS1.

Its subcellular location is the mitochondrion matrix. The catalysed reaction is ATP + H2O + a folded polypeptide = ADP + phosphate + an unfolded polypeptide.. Chaperonin implicated in mitochondrial protein import and macromolecular assembly. Together with Hsp10, facilitates the correct folding of imported proteins. May also prevent misfolding and promote the refolding and proper assembly of unfolded polypeptides generated under stress conditions in the mitochondrial matrix. The functional units of these chaperonins consist of heptameric rings of the large subunit Hsp60, which function as a back-to-back double ring. In a cyclic reaction, Hsp60 ring complexes bind one unfolded substrate protein per ring, followed by the binding of ATP and association with 2 heptameric rings of the co-chaperonin Hsp10. This leads to sequestration of the substrate protein in the inner cavity of Hsp60 where, for a certain period of time, it can fold undisturbed by other cell components. Synchronous hydrolysis of ATP in all Hsp60 subunits results in the dissociation of the chaperonin rings and the release of ADP and the folded substrate protein. The polypeptide is 60 kDa heat shock protein, mitochondrial (HSPD1) (Pongo abelii (Sumatran orangutan)).